Here is a 259-residue protein sequence, read N- to C-terminus: Global transcriptional regulator CodY (259 aa).

The interval 1–155 is GAF domain; that stretch reads MTLLEKTRKI…GGTVVGMEIL (155 aa). The segment at residues 203-222 is a DNA-binding region (H-T-H motif); it reads ASKIADRVGITRSVIVNALR.

This sequence belongs to the CodY family.

The protein localises to the cytoplasm. Functionally, DNA-binding global transcriptional regulator which is involved in the adaptive response to starvation and acts by directly or indirectly controlling the expression of numerous genes in response to nutrient availability. During rapid exponential growth, CodY is highly active and represses genes whose products allow adaptation to nutrient depletion. In Listeria welshimeri serovar 6b (strain ATCC 35897 / DSM 20650 / CCUG 15529 / CIP 8149 / NCTC 11857 / SLCC 5334 / V8), this protein is Global transcriptional regulator CodY.